The sequence spans 483 residues: 6-phosphogluconate dehydrogenase, decarboxylating (483 aa).

NADP(+)-binding positions include 10–15 (GLAVMG) and 33–35 (NRT). An N6-acetyllysine modification is found at lysine 38. Serine 57 carries the post-translational modification Phosphoserine. Position 59 is an N6-acetyllysine (lysine 59). NADP(+) is bound by residues 75–77 (VKA) and asparagine 103. Substrate-binding positions include asparagine 103 and 129-131 (SGG). Serine 129 carries the phosphoserine modification. Residue lysine 184 is the Proton acceptor of the active site. Residue 187–188 (HN) coordinates substrate. Residue glutamate 191 is the Proton donor of the active site. 3 residues coordinate substrate: tyrosine 192, lysine 261, and arginine 288. The residue at position 309 (lysine 309) is an N6-acetyllysine. Residues arginine 447 and histidine 453 each coordinate substrate. NADP(+) is bound at residue 478 to 481 (SSSY).

This sequence belongs to the 6-phosphogluconate dehydrogenase family. As to quaternary structure, homodimer.

It localises to the cytoplasm. The enzyme catalyses 6-phospho-D-gluconate + NADP(+) = D-ribulose 5-phosphate + CO2 + NADPH. Its pathway is carbohydrate degradation; pentose phosphate pathway; D-ribulose 5-phosphate from D-glucose 6-phosphate (oxidative stage): step 3/3. In terms of biological role, catalyzes the oxidative decarboxylation of 6-phosphogluconate to ribulose 5-phosphate and CO(2), with concomitant reduction of NADP to NADPH. The sequence is that of 6-phosphogluconate dehydrogenase, decarboxylating (PGD) from Homo sapiens (Human).